A 150-amino-acid polypeptide reads, in one-letter code: 3-hydroxyacyl-[acyl-carrier-protein] dehydratase FabZ (150 aa).

His57 is a catalytic residue.

This sequence belongs to the thioester dehydratase family. FabZ subfamily.

Its subcellular location is the cytoplasm. The enzyme catalyses a (3R)-hydroxyacyl-[ACP] = a (2E)-enoyl-[ACP] + H2O. Functionally, involved in unsaturated fatty acids biosynthesis. Catalyzes the dehydration of short chain beta-hydroxyacyl-ACPs and long chain saturated and unsaturated beta-hydroxyacyl-ACPs. The chain is 3-hydroxyacyl-[acyl-carrier-protein] dehydratase FabZ from Actinobacillus succinogenes (strain ATCC 55618 / DSM 22257 / CCUG 43843 / 130Z).